A 706-amino-acid polypeptide reads, in one-letter code: Cyclic nucleotide-gated channel alpha-3 (706 aa).

Residues 1–189 (MAKISTQYSH…MDPSSNMYYH (189 aa)) lie on the Cytoplasmic side of the membrane. A disordered region spans residues 113 to 177 (RESHVQFNVG…PKKEEKKKDS (65 aa)). Basic and acidic residues predominate over residues 147-177 (SEKDDKAKKEEKEKKEEKKENPKKEEKKKDS). The chain crosses the membrane as a helical span at residues 190-211 (WLTVIAVPVFYNWCLLVCRACF). The Extracellular portion of the chain corresponds to 212 to 217 (DELQSE). A helical membrane pass occupies residues 218-238 (HLMLWLVLDYSADILYGMDML). Residues 239–265 (VRARTGFLEQGLMVMDASRLWKHYTQT) are Cytoplasmic-facing. Residues 266 to 285 (LHFKLDVLSLVPTDLAYFKL) traverse the membrane as a helical segment. The Extracellular portion of the chain corresponds to 286 to 289 (GMNY). The helical transmembrane segment at 290–307 (PELRFNRLLKLARLFEFF) threads the bilayer. The Cytoplasmic portion of the chain corresponds to 308 to 317 (DRTETRTNYP). The tract at residues 317-425 (PNMFRIGNLV…GNVGSMISNM (109 aa)) is ion conduction pathway. The helical transmembrane segment at 318 to 340 (NMFRIGNLVLYILIIIHWNACIY) threads the bilayer. At 341–366 (FAISKFIGFGTDSWVYPNVSNPEYGR) the chain is on the extracellular side. An N-linked (GalNAc...) asparagine glycan is attached at Asn358. The next 2 helical transmembrane spans lie at 367 to 397 (LSRK…DEEY) and 398 to 422 (LFVV…GSMI). The tract at residues 384 to 387 (TIGE) is selectivity filter. Residues 423-706 (SNMNASRAEF…DAPQTEASQP (284 aa)) are Cytoplasmic-facing. Residues 427–504 (ASRAEFQAKI…TLRKVRIFQD (78 aa)) are C-linker. The cyclic nucleotide-binding domain stretch occupies residues 507-627 (AGLLVELVLK…EEKGRQILMK (121 aa)). 3',5'-cyclic GMP is bound by residues Gly567, Glu568, Ser570, Arg583, Thr584, and Asp628. The stretch at 645–688 (IEEKVEHLETSLDSLQTRFARLLAEYNATQMKVKQRLSQLESQV) forms a coiled coil. Residues 685 to 706 (ESQVKMGLPPDGDAPQTEASQP) are disordered.

This sequence belongs to the cyclic nucleotide-gated cation channel (TC 1.A.1.5) family. CNGA3 subfamily. Forms heterotetrameric channels composed of CNGA3 and CNGB3 subunits with 3:1 stoichiometry. As to expression, testis, kidney, retinal cone (at protein level) and heart.

It localises to the cell membrane. It catalyses the reaction Ca(2+)(in) = Ca(2+)(out). It carries out the reaction Na(+)(in) = Na(+)(out). The catalysed reaction is K(+)(in) = K(+)(out). The enzyme catalyses NH4(+)(in) = NH4(+)(out). It catalyses the reaction Rb(+)(in) = Rb(+)(out). It carries out the reaction Li(+)(in) = Li(+)(out). The catalysed reaction is Cs(+)(in) = Cs(+)(out). Its activity is regulated as follows. Ca(2+) influx is inhibited by extracellular Mg(2+) ions. Its function is as follows. Pore-forming subunit of the cone cyclic nucleotide-gated channel. Mediates cone photoresponses at bright light converting transient changes in intracellular cGMP levels into electrical signals. In the dark, cGMP levels are high and keep the channel open enabling a steady inward current carried by Na(+) and Ca(2+) ions that leads to membrane depolarization and neurotransmitter release from synaptic terminals. Upon photon absorption cGMP levels decline leading to channel closure and membrane hyperpolarization that ultimately slows neurotransmitter release and signals the presence of light, the end point of the phototransduction cascade. Pore-forming subunit of the gustatory cyclic nucleotide-gated channel. In the taste buds, may sense oral extracellular pH and conduct ion currents that modulate the excitability of taste cells. Conducts cGMP- and cAMP-gated ion currents, with permeability for monovalent and divalent cations. In Bos taurus (Bovine), this protein is Cyclic nucleotide-gated channel alpha-3.